The primary structure comprises 66 residues: Large ribosomal subunit protein bL35 (66 aa).

This sequence belongs to the bacterial ribosomal protein bL35 family.

The chain is Large ribosomal subunit protein bL35 from Ruegeria sp. (strain TM1040) (Silicibacter sp.).